Reading from the N-terminus, the 303-residue chain is Probable cell division protein WhiA (303 aa).

Residues 272–303 (SIQQVADALEFPITKSGVNHRLRKINKIADDL) constitute a DNA-binding region (H-T-H motif).

The protein belongs to the WhiA family.

In terms of biological role, involved in cell division and chromosome segregation. The protein is Probable cell division protein WhiA of Streptococcus pyogenes serotype M6 (strain ATCC BAA-946 / MGAS10394).